The primary structure comprises 181 residues: Protein Syd (181 aa).

Belongs to the Syd family.

Its subcellular location is the cell inner membrane. Functionally, interacts with the SecY protein in vivo. May bind preferentially to an uncomplexed state of SecY, thus functioning either as a chelating agent for excess SecY in the cell or as a regulatory factor that negatively controls the translocase function. This chain is Protein Syd, found in Citrobacter koseri (strain ATCC BAA-895 / CDC 4225-83 / SGSC4696).